Here is a 425-residue protein sequence, read N- to C-terminus: Serine--tRNA ligase (425 aa).

Residue 230 to 232 (TAE) coordinates L-serine. Position 261–263 (261–263 (RSE)) interacts with ATP. E284 is a binding site for L-serine. Residue 348-351 (EISS) participates in ATP binding. An L-serine-binding site is contributed by S384.

The protein belongs to the class-II aminoacyl-tRNA synthetase family. Type-1 seryl-tRNA synthetase subfamily. As to quaternary structure, homodimer. The tRNA molecule binds across the dimer.

The protein resides in the cytoplasm. It carries out the reaction tRNA(Ser) + L-serine + ATP = L-seryl-tRNA(Ser) + AMP + diphosphate + H(+). The catalysed reaction is tRNA(Sec) + L-serine + ATP = L-seryl-tRNA(Sec) + AMP + diphosphate + H(+). It functions in the pathway aminoacyl-tRNA biosynthesis; selenocysteinyl-tRNA(Sec) biosynthesis; L-seryl-tRNA(Sec) from L-serine and tRNA(Sec): step 1/1. Catalyzes the attachment of serine to tRNA(Ser). Is also able to aminoacylate tRNA(Sec) with serine, to form the misacylated tRNA L-seryl-tRNA(Sec), which will be further converted into selenocysteinyl-tRNA(Sec). In Streptococcus pyogenes serotype M5 (strain Manfredo), this protein is Serine--tRNA ligase.